We begin with the raw amino-acid sequence, 217 residues long: UPF0502 protein ETA_20480 (217 aa).

The tract at residues 169 to 188 is disordered; sequence GEVDESSRADGHHPDDHRGD. The span at 173–188 shows a compositional bias: basic and acidic residues; it reads ESSRADGHHPDDHRGD.

Belongs to the UPF0502 family.

The sequence is that of UPF0502 protein ETA_20480 from Erwinia tasmaniensis (strain DSM 17950 / CFBP 7177 / CIP 109463 / NCPPB 4357 / Et1/99).